The chain runs to 391 residues: Formate-dependent phosphoribosylglycinamide formyltransferase (391 aa).

N(1)-(5-phospho-beta-D-ribosyl)glycinamide is bound by residues 20 to 21 (EL) and glutamate 80. Residues arginine 112, lysine 153, 158–163 (SSGKGQ), 193–196 (EGFI), and glutamate 201 each bind ATP. An ATP-grasp domain is found at 117–306 (RLAAEELDLS…EFALHVRAFT (190 aa)). Residues glutamate 265 and glutamate 277 each contribute to the Mg(2+) site. N(1)-(5-phospho-beta-D-ribosyl)glycinamide contacts are provided by residues aspartate 284, lysine 354, and 361 to 362 (RR).

The protein belongs to the PurK/PurT family. In terms of assembly, homodimer.

It catalyses the reaction N(1)-(5-phospho-beta-D-ribosyl)glycinamide + formate + ATP = N(2)-formyl-N(1)-(5-phospho-beta-D-ribosyl)glycinamide + ADP + phosphate + H(+). Its pathway is purine metabolism; IMP biosynthesis via de novo pathway; N(2)-formyl-N(1)-(5-phospho-D-ribosyl)glycinamide from N(1)-(5-phospho-D-ribosyl)glycinamide (formate route): step 1/1. In terms of biological role, involved in the de novo purine biosynthesis. Catalyzes the transfer of formate to 5-phospho-ribosyl-glycinamide (GAR), producing 5-phospho-ribosyl-N-formylglycinamide (FGAR). Formate is provided by PurU via hydrolysis of 10-formyl-tetrahydrofolate. The chain is Formate-dependent phosphoribosylglycinamide formyltransferase from Vibrio parahaemolyticus serotype O3:K6 (strain RIMD 2210633).